Consider the following 314-residue polypeptide: Acetyl-coenzyme A carboxylase carboxyl transferase subunit beta (314 aa).

The CoA carboxyltransferase N-terminal domain occupies 24–293 (LWIKCPDTGQ…IDAAPEPSPA (270 aa)). The disordered stretch occupies residues 283–314 (EIDAAPEPSPAAEEPAEPMPAPEAAAPSAPPA). Composition is skewed to low complexity over residues 284 to 295 (IDAAPEPSPAAE) and 304 to 314 (PEAAAPSAPPA).

It belongs to the AccD/PCCB family. In terms of assembly, acetyl-CoA carboxylase is a heterohexamer composed of biotin carboxyl carrier protein (AccB), biotin carboxylase (AccC) and two subunits each of ACCase subunit alpha (AccA) and ACCase subunit beta (AccD).

Its subcellular location is the cytoplasm. It carries out the reaction N(6)-carboxybiotinyl-L-lysyl-[protein] + acetyl-CoA = N(6)-biotinyl-L-lysyl-[protein] + malonyl-CoA. Its pathway is lipid metabolism; malonyl-CoA biosynthesis; malonyl-CoA from acetyl-CoA: step 1/1. Its function is as follows. Component of the acetyl coenzyme A carboxylase (ACC) complex. Biotin carboxylase (BC) catalyzes the carboxylation of biotin on its carrier protein (BCCP) and then the CO(2) group is transferred by the transcarboxylase to acetyl-CoA to form malonyl-CoA. This chain is Acetyl-coenzyme A carboxylase carboxyl transferase subunit beta, found in Nitrobacter hamburgensis (strain DSM 10229 / NCIMB 13809 / X14).